The chain runs to 115 residues: MKFVLLFGVLLVTLFSYSSAEMLDDFDQADEDELLSLIEKEEARAKECTPRFYDCSHDRHSCCRSELFKDVCTCFYPEGGDNEVRTCQQPKHLKYMEKAADKAKKFGGKIKKWFG.

A signal peptide spans 1–20 (MKFVLLFGVLLVTLFSYSSA). Positions 21-44 (EMLDDFDQADEDELLSLIEKEEAR) are excised as a propeptide. 3 disulfide bridges follow: cysteine 48–cysteine 63, cysteine 55–cysteine 72, and cysteine 62–cysteine 87.

The protein belongs to the neurotoxin 19 (CSTX) family. 01 subfamily. In terms of tissue distribution, expressed by the venom gland.

It localises to the secreted. The polypeptide is U3-lycotoxin-Ls1u (Lycosa singoriensis (Wolf spider)).